The sequence spans 514 residues: 2,3-bisphosphoglycerate-independent phosphoglycerate mutase (514 aa).

Residues D13 and S63 each contribute to the Mn(2+) site. S63 acts as the Phosphoserine intermediate in catalysis. Residues H124, 154 to 155 (RD), R186, R192, 258 to 261 (RADR), and K332 each bind substrate. Mn(2+)-binding residues include D399, H403, D440, H441, and H459.

Belongs to the BPG-independent phosphoglycerate mutase family. In terms of assembly, monomer. Mn(2+) serves as cofactor.

It catalyses the reaction (2R)-2-phosphoglycerate = (2R)-3-phosphoglycerate. It functions in the pathway carbohydrate degradation; glycolysis; pyruvate from D-glyceraldehyde 3-phosphate: step 3/5. In terms of biological role, catalyzes the interconversion of 2-phosphoglycerate and 3-phosphoglycerate. The polypeptide is 2,3-bisphosphoglycerate-independent phosphoglycerate mutase (Legionella pneumophila (strain Paris)).